We begin with the raw amino-acid sequence, 442 residues long: MSDTIAAIATAHGVGSISIVRLSGERALEFALRFSRKTKLTPRHATFTKLFNQNNEIIDEAIMIYFKAPYSFTGEDIVEFQTHGGFSVSEVLLEELVSLGARFALAGEFSKRACLNGKMTPLKALNIQDLILSKSALAAKIIARNMQGNLGELLEKIRTDLVKTLAFVETSIDYADDDLPSDLLEKISTMCEENSKILKEIYTLSQSKKGLIEGFKIAIIGKPNVGKSSLLNALLSYERAIVSDIAGTTRDTIEESFKLGTHLLRIIDTAGIRESKDTIEQIGVALSKKSLEDADIILAVFDASRVQDKEDEKIFELLANTDKKIFWILNKSDLENVFKNTRNKNFIKLSAQKDIALLKEELQNYLNSFDSEGIMVSSLDLINACKISSEAIFRAKELLEESSLELFAFELNLAINELARFTKDFQRDEILDEMFGNFCLGK.

Residues R21, E79, and K118 each coordinate (6S)-5-formyl-5,6,7,8-tetrahydrofolate. The 154-residue stretch at 214 to 367 folds into the TrmE-type G domain; it reads GFKIAIIGKP…LKEELQNYLN (154 aa). N224 is a binding site for K(+). Residues 224-229, 243-249, and 268-271 contribute to the GTP site; these read NVGKSS, SDIAGTT, and DTAG. S228 is a Mg(2+) binding site. K(+)-binding residues include S243, I245, and T248. T249 provides a ligand contact to Mg(2+). K442 is a (6S)-5-formyl-5,6,7,8-tetrahydrofolate binding site.

This sequence belongs to the TRAFAC class TrmE-Era-EngA-EngB-Septin-like GTPase superfamily. TrmE GTPase family. As to quaternary structure, homodimer. Heterotetramer of two MnmE and two MnmG subunits. Requires K(+) as cofactor.

Its subcellular location is the cytoplasm. Functionally, exhibits a very high intrinsic GTPase hydrolysis rate. Involved in the addition of a carboxymethylaminomethyl (cmnm) group at the wobble position (U34) of certain tRNAs, forming tRNA-cmnm(5)s(2)U34. The polypeptide is tRNA modification GTPase MnmE (Campylobacter jejuni subsp. doylei (strain ATCC BAA-1458 / RM4099 / 269.97)).